The primary structure comprises 687 residues: Protein-glutamine gamma-glutamyltransferase 2 (687 aa).

Ala-2 is subject to N-acetylalanine. Position 60 is a phosphoserine (Ser-60). Disulfide bonds link Cys-230/Cys-370 and Cys-370/Cys-371. Active-site residues include Cys-277, His-335, and Asp-358. 5 residues coordinate Ca(2+): Asn-398, Asp-400, Glu-437, Glu-447, and Glu-452. The residue at position 468 (Lys-468) is an N6-acetyllysine. Residue 476–483 coordinates GTP; sequence RIRVGQSM. Glu-539 serves as a coordination point for Ca(2+). 580 to 583 contacts GTP; the sequence is RDLY. Gln-633 is covalently cross-linked (Isoglutamyl lysine isopeptide (Gln-Lys) (interchain with K-?)).

It belongs to the transglutaminase superfamily. Transglutaminase family. Monomer. Interacts with phospholipase C; promoting alpha-1 adrenergic receptor signaling. Interacts with PLCD1. In terms of assembly, homooligomer. Ca(2+) serves as cofactor. Disulfide bond formation inactivates the calcium-dependent acyltransferase activity. Cys-370 can form disulfide bonds with both Cys-230 and Cys-371: formation of a disulfide bond between Cys-230 and Cys-370 facilitates formation of the disulfide between Cys-370 and Cys-371, which promotes inactivation of the acyltransferase activity. May also form interchain disulfids between Cys-230 and Cys-370. Ca(2+) protects against disulfide bond formation and inactivation. Post-translationally, auto-transglutaminated: Forms covalent cross-links mediated by transglutaminase between Gln-633 and the epsilon-amino group of a lysine residue of itself or HMGB1, forming homopolymers and heteropolymers, respectively. In terms of processing, S-nitrosylated, leading to inactivation of the acyltransferase activity.

The protein resides in the cytoplasm. It is found in the cytosol. It localises to the nucleus. Its subcellular location is the chromosome. The protein localises to the secreted. The protein resides in the extracellular space. It is found in the extracellular matrix. It localises to the cell membrane. Its subcellular location is the mitochondrion. The protein localises to the perinuclear region. The catalysed reaction is L-glutaminyl-[protein] + L-lysyl-[protein] = [protein]-L-lysyl-N(6)-5-L-glutamyl-[protein] + NH4(+). It carries out the reaction L-glutaminyl-[protein] + serotonin = 5-serotonyl-L-glutamyl-[protein] + NH4(+). It catalyses the reaction L-glutaminyl-[protein] + dopamine = 5-dopaminyl-L-glutamyl-[protein] + NH4(+). The enzyme catalyses L-glutaminyl-[protein] + histamine = 5-histaminyl-L-glutamyl-[protein] + NH4(+). The catalysed reaction is L-glutaminyl-[protein] + (R)-noradrenaline = 5-(R)-noradrenalinyl-L-glutamyl-[protein] + NH4(+). It carries out the reaction L-glutaminyl-[protein] + H2O = L-glutamyl-[protein] + NH4(+). Its activity is regulated as follows. Acyltransferase activity is regulated by the binding of GTP and Ca(2+): inactivated by GTP, which stabilizes its closed structure, thereby obstructing the accessibility of substrates to the active sites. In contrast, Ca(2+) acts as a cofactor by inducing conformational change to the active open form. In absence of Ca(2+), Mg(2+) may bind Ca(2+)-binding sites, promoting GTP-binding and subsequent inhibition of the acyltransferase activity. Extracellularly reduced and activated by CLIC3. Specifically inhibited by compound VA4 ((S)-Benzyl (6-Acrylamido-1-(4-((5-(dimethylamino)naphthalen-1-yl)sulfonyl)piperazin-1-yl)-1-oxohexan-2-yl)carbamate), which specifically abolishes both the transamidation and GTP-binding activities. Functionally, calcium-dependent acyltransferase that catalyzes the formation of covalent bonds between peptide-bound glutamine and various primary amines, such as gamma-amino group of peptide-bound lysine, or mono- and polyamines, thereby producing cross-linked or aminated proteins, respectively. Involved in many biological processes, such as bone development, angiogenesis, wound healing, cellular differentiation, chromatin modification and apoptosis. Acts as a protein-glutamine gamma-glutamyltransferase by mediating the cross-linking of proteins, such as ACO2, HSPB6, FN1, HMGB1, RAP1GDS1, SLC25A4/ANT1, SPP1 and WDR54. Under physiological conditions, the protein cross-linking activity is inhibited by GTP; inhibition is relieved by Ca(2+) in response to various stresses. When secreted, catalyzes cross-linking of proteins of the extracellular matrix, such as FN1 and SPP1 resulting in the formation of scaffolds. Plays a key role during apoptosis, both by (1) promoting the cross-linking of cytoskeletal proteins resulting in condensation of the cytoplasm, and by (2) mediating cross-linking proteins of the extracellular matrix, resulting in the irreversible formation of scaffolds that stabilize the integrity of the dying cells before their clearance by phagocytosis, thereby preventing the leakage of harmful intracellular components. In addition to protein cross-linking, can use different monoamine substrates to catalyze a vast array of protein post-translational modifications: mediates aminylation of serotonin, dopamine, noradrenaline or histamine into glutamine residues of target proteins to generate protein serotonylation, dopaminylation, noradrenalinylation or histaminylation, respectively. Mediates protein serotonylation of small GTPases during activation and aggregation of platelets, leading to constitutive activation of these GTPases. Plays a key role in chromatin organization by mediating serotonylation and dopaminylation of histone H3. Catalyzes serotonylation of 'Gln-5' of histone H3 (H3Q5ser) during serotonergic neuron differentiation, thereby facilitating transcription. Acts as a mediator of neurotransmission-independent role of nuclear dopamine in ventral tegmental area (VTA) neurons: catalyzes dopaminylation of 'Gln-5' of histone H3 (H3Q5dop), thereby regulating relapse-related transcriptional plasticity in the reward system. Regulates vein remodeling by mediating serotonylation and subsequent inactivation of ATP2A2/SERCA2. Also acts as a protein deamidase by mediating the side chain deamidation of specific glutamine residues of proteins to glutamate. Catalyzes specific deamidation of protein gliadin, a component of wheat gluten in the diet. May also act as an isopeptidase cleaving the previously formed cross-links. Also able to participate in signaling pathways independently of its acyltransferase activity: acts as a signal transducer in alpha-1 adrenergic receptor-mediated stimulation of phospholipase C-delta (PLCD) activity and is required for coupling alpha-1 adrenergic agonists to the stimulation of phosphoinositide lipid metabolism. In terms of biological role, has cytotoxic activity: is able to induce apoptosis independently of its acyltransferase activity. In Homo sapiens (Human), this protein is Protein-glutamine gamma-glutamyltransferase 2.